A 57-amino-acid polypeptide reads, in one-letter code: UPF0434 protein Spea_1772 (57 aa).

The protein belongs to the UPF0434 family.

This chain is UPF0434 protein Spea_1772, found in Shewanella pealeana (strain ATCC 700345 / ANG-SQ1).